The primary structure comprises 1486 residues: Chromosome partition protein MukB (1486 aa).

ATP is bound at residue 34–41 (GGNGAGKS). 3 coiled-coil regions span residues 326–418 (LEAD…QYNQ), 444–480 (LETFQAKELEATEKMLSLEQKMSMAQTAHSQFEQAYQ), and 509–603 (RHLA…RAPV). A flexible hinge region spans residues 666-783 (PGGSEDQRLN…EVPLFGRAAR (118 aa)). Coiled coils occupy residues 835 to 923 (EAEI…AKLE), 977 to 1115 (EMLS…TAKA), and 1209 to 1266 (VEAI…QNVS).

The protein belongs to the SMC family. MukB subfamily. In terms of assembly, homodimerization via its hinge domain. Binds to DNA via its C-terminal region. Interacts, and probably forms a ternary complex, with MukE and MukF via its C-terminal region. The complex formation is stimulated by calcium or magnesium. Interacts with tubulin-related protein FtsZ.

The protein localises to the cytoplasm. It localises to the nucleoid. Its function is as follows. Plays a central role in chromosome condensation, segregation and cell cycle progression. Functions as a homodimer, which is essential for chromosome partition. Involved in negative DNA supercoiling in vivo, and by this means organize and compact chromosomes. May achieve or facilitate chromosome segregation by condensation DNA from both sides of a centrally located replisome during cell division. This is Chromosome partition protein MukB from Escherichia coli O6:H1 (strain CFT073 / ATCC 700928 / UPEC).